A 145-amino-acid polypeptide reads, in one-letter code: D-aminoacyl-tRNA deacylase (145 aa).

The Gly-cisPro motif, important for rejection of L-amino acids signature appears at 137–138 (GP).

This sequence belongs to the DTD family. In terms of assembly, homodimer.

The protein resides in the cytoplasm. The enzyme catalyses glycyl-tRNA(Ala) + H2O = tRNA(Ala) + glycine + H(+). The catalysed reaction is a D-aminoacyl-tRNA + H2O = a tRNA + a D-alpha-amino acid + H(+). In terms of biological role, an aminoacyl-tRNA editing enzyme that deacylates mischarged D-aminoacyl-tRNAs. Also deacylates mischarged glycyl-tRNA(Ala), protecting cells against glycine mischarging by AlaRS. Acts via tRNA-based rather than protein-based catalysis; rejects L-amino acids rather than detecting D-amino acids in the active site. By recycling D-aminoacyl-tRNA to D-amino acids and free tRNA molecules, this enzyme counteracts the toxicity associated with the formation of D-aminoacyl-tRNA entities in vivo and helps enforce protein L-homochirality. This chain is D-aminoacyl-tRNA deacylase, found in Shewanella denitrificans (strain OS217 / ATCC BAA-1090 / DSM 15013).